Reading from the N-terminus, the 826-residue chain is U-box domain-containing protein 4 (826 aa).

A coiled-coil region spans residues 172-204; that stretch reads RSNQEILIEAVALERQKEMAEQSENNAEVEFLD. The 75-residue stretch at 229-303 folds into the U-box domain; that stretch reads AILADFFCPL…ANWCETNDVK (75 aa). The segment at 330–501 is disordered; it reads GADVSARKVS…TRRDLSDFSP (172 aa). Positions 347–360 are enriched in polar residues; it reads ASSSETGKPSFSSR. Residues 391–414 are compositionally biased toward basic and acidic residues; that stretch reads DARRGSLNDFEDRSNDSRELRTDA. Residue S396 is modified to Phosphoserine. Residues 416–428 show a composition bias toward low complexity; sequence GRSSVSSTTRGSV. The span at 492–501 shows a compositional bias: basic and acidic residues; it reads TRRDLSDFSP. 7 ARM repeats span residues 530 to 570, 573 to 612, 614 to 653, 655 to 694, 696 to 734, 736 to 775, and 778 to 817; these read NETR…LLAK, MDNR…NLSI, DNNK…SLSV, EENK…NLSI, QENK…NLAT, PEGR…QLST, and GRFC…YFRN.

The enzyme catalyses S-ubiquitinyl-[E2 ubiquitin-conjugating enzyme]-L-cysteine + [acceptor protein]-L-lysine = [E2 ubiquitin-conjugating enzyme]-L-cysteine + N(6)-ubiquitinyl-[acceptor protein]-L-lysine.. Its pathway is protein modification; protein ubiquitination. In terms of biological role, functions as an E3 ubiquitin ligase. This chain is U-box domain-containing protein 4 (PUB4), found in Arabidopsis thaliana (Mouse-ear cress).